A 772-amino-acid chain; its full sequence is Calcium-binding mitochondrial carrier protein (772 aa).

Residues 1–377 form an N-terminal domain region; it reads MFANRVRQAQ…SISDFEKSTG (377 aa). 4 consecutive EF-hand domains span residues 132–165, 166–201, 235–270, and 347–382; these read LDAD…ELMA, KPEA…SLDP, LQQE…VKLR, and ITPL…NINK. Ca(2+) contacts are provided by aspartate 145, aspartate 147, threonine 149, tyrosine 151, glutamate 156, aspartate 179, aspartate 181, asparagine 183, tyrosine 185, and aspartate 190. Ca(2+)-binding residues include aspartate 360, asparagine 362, aspartate 364, lysine 366, and aspartate 371. The interval 378-422 is linker loop domain; it reads LNINKIGGGTNYSDSYPSDSHVTIQNSSTTPSPSTPITNTAAAIA. Positions 432–720 are carrier domain; the sequence is AQQVLESIEN…KALLPDAEYK (289 aa). 3 Solcar repeats span residues 436–526, 535–616, and 624–712; these read LESI…LRDL, IYFP…MKTI, and LGPM…LQKA. Helical transmembrane passes span 442–459, 501–520, 545–558, 591–610, 630–647, and 687–706; these read FALG…VYPI, GILP…LTVN, GFAG…TNPL, GAGA…FPTY, LLAG…VTPA, and GALA…LVSY. Residues 721 to 772 are C-terminal domain; that stretch reads PPTNAPITQKDFDVIRGNTNTVQRVIDMESKFGTLHQTRDNNKSSNGGENKN. Residues 751-772 are disordered; that stretch reads KFGTLHQTRDNNKSSNGGENKN. Low complexity predominate over residues 763–772; it reads KSSNGGENKN.

Belongs to the mitochondrial carrier (TC 2.A.29) family. Homodimer (via N-terminus).

It is found in the mitochondrion inner membrane. In terms of biological role, mitochondrial and calcium-binding carrier that catalyzes the calcium-dependent exchange of cytoplasmic glutamate with mitochondrial aspartate across the mitochondrial inner membrane. The sequence is that of Calcium-binding mitochondrial carrier protein (mcfO) from Dictyostelium discoideum (Social amoeba).